A 66-amino-acid chain; its full sequence is Large ribosomal subunit protein bL35 (66 aa).

Basic residues predominate over residues 1–26 (MPKMKTHRGGAKRVKRTGSGKLKRSR). 2 disordered regions span residues 1 to 28 (MPKM…SRAY) and 36 to 55 (KSTK…KGDQ).

It belongs to the bacterial ribosomal protein bL35 family.

The chain is Large ribosomal subunit protein bL35 from Macrococcus caseolyticus (strain JCSC5402) (Macrococcoides caseolyticum).